We begin with the raw amino-acid sequence, 102 residues long: Small ribosomal subunit protein uS10 (102 aa).

It belongs to the universal ribosomal protein uS10 family. As to quaternary structure, part of the 30S ribosomal subunit.

Its function is as follows. Involved in the binding of tRNA to the ribosomes. This chain is Small ribosomal subunit protein uS10, found in Limosilactobacillus reuteri (strain DSM 20016) (Lactobacillus reuteri).